We begin with the raw amino-acid sequence, 101 residues long: Large ribosomal subunit protein uL23 (101 aa).

This sequence belongs to the universal ribosomal protein uL23 family. As to quaternary structure, part of the 50S ribosomal subunit. Contacts protein L29, and trigger factor when it is bound to the ribosome.

Its function is as follows. One of the early assembly proteins it binds 23S rRNA. One of the proteins that surrounds the polypeptide exit tunnel on the outside of the ribosome. Forms the main docking site for trigger factor binding to the ribosome. In Micrococcus luteus (strain ATCC 4698 / DSM 20030 / JCM 1464 / CCM 169 / CCUG 5858 / IAM 1056 / NBRC 3333 / NCIMB 9278 / NCTC 2665 / VKM Ac-2230) (Micrococcus lysodeikticus), this protein is Large ribosomal subunit protein uL23.